A 438-amino-acid chain; its full sequence is GTPase Der (438 aa).

2 EngA-type G domains span residues 4–168 and 176–351; these read PIVA…PAVP and LKVA…EAAN. GTP is bound by residues 10–17, 57–61, 120–123, 182–189, 229–233, and 294–297; these read GRPNVGKS, DTGGI, NKVE, DTAGM, and NKWD. The KH-like domain occupies 352-436; it reads RRVATGTLNA…PIRLIFRRGR (85 aa).

Belongs to the TRAFAC class TrmE-Era-EngA-EngB-Septin-like GTPase superfamily. EngA (Der) GTPase family. In terms of assembly, associates with the 50S ribosomal subunit.

In terms of biological role, GTPase that plays an essential role in the late steps of ribosome biogenesis. This is GTPase Der from Moorella thermoacetica (strain ATCC 39073 / JCM 9320).